A 67-amino-acid chain; its full sequence is Probable Sec-independent protein translocase protein TatE (67 aa).

Residues 4 to 21 (ISITKLLVIAALVVLLFG) traverse the membrane as a helical segment. The interval 44–67 (NDDDTGAKTPAASEAPAERLSHKE) is disordered.

The protein belongs to the TatA/E family. TatE subfamily.

Its subcellular location is the cell inner membrane. Functionally, part of the twin-arginine translocation (Tat) system that transports large folded proteins containing a characteristic twin-arginine motif in their signal peptide across membranes. TatE shares overlapping functions with TatA. The polypeptide is Probable Sec-independent protein translocase protein TatE (Cronobacter sakazakii (strain ATCC BAA-894) (Enterobacter sakazakii)).